Consider the following 1001-residue polypeptide: uncharacterized protein (1001 aa).

Basic and acidic residues predominate over residues Lys939–Ser948. The interval Lys939–Asn1001 is disordered. Residues Ser948 and Ser950 each carry the phosphoserine modification.

This is an uncharacterized protein from Schizosaccharomyces pombe (strain 972 / ATCC 24843) (Fission yeast).